A 314-amino-acid polypeptide reads, in one-letter code: 2,3,4,5-tetrahydropyridine-2,6-dicarboxylate N-succinyltransferase (314 aa).

Mg(2+) contacts are provided by D163 and E180. The active-site Acyl-anhydride intermediate is the E196. Residues R198, G213, S216, A239, 254–255 (EA), G262, K274, and 287–290 (RRNS) contribute to the succinyl-CoA site.

Belongs to the type 2 tetrahydrodipicolinate N-succinyltransferase family. Homotrimer.

The protein localises to the cytoplasm. The catalysed reaction is (S)-2,3,4,5-tetrahydrodipicolinate + succinyl-CoA + H2O = (S)-2-succinylamino-6-oxoheptanedioate + CoA. It functions in the pathway amino-acid biosynthesis; L-lysine biosynthesis via DAP pathway; LL-2,6-diaminopimelate from (S)-tetrahydrodipicolinate (succinylase route): step 1/3. In terms of biological role, catalyzes the conversion of the cyclic tetrahydrodipicolinate (THDP) into the acyclic N-succinyl-L-2-amino-6-oxopimelate using succinyl-CoA. In Mycolicibacterium smegmatis (strain ATCC 700084 / mc(2)155) (Mycobacterium smegmatis), this protein is 2,3,4,5-tetrahydropyridine-2,6-dicarboxylate N-succinyltransferase.